The sequence spans 480 residues: tRNA-2-methylthio-N(6)-dimethylallyladenosine synthase (480 aa).

Positions 2-118 constitute an MTTase N-terminal domain; that stretch reads NRVHIKTYGC…VPGYLDNLRA (117 aa). Cys-11, Cys-47, and Cys-81 together coordinate [4Fe-4S] cluster. Residues 145 to 169 are disordered; the sequence is DHLLPQDSDSDSQPSTLNSQLRGAA. The span at 149–159 shows a compositional bias: low complexity; that stretch reads PQDSDSDSQPS. Residues 171–405 form the Radical SAM core domain; that stretch reads PPPQITAFVS…LELLRQNSER (235 aa). [4Fe-4S] cluster-binding residues include Cys-185, Cys-189, and Cys-192. The TRAM domain maps to 408–470; the sequence is ALLLDTVEEV…VSTLYGELML (63 aa).

It belongs to the methylthiotransferase family. MiaB subfamily. In terms of assembly, monomer. [4Fe-4S] cluster is required as a cofactor.

Its subcellular location is the cytoplasm. The catalysed reaction is N(6)-dimethylallyladenosine(37) in tRNA + (sulfur carrier)-SH + AH2 + 2 S-adenosyl-L-methionine = 2-methylsulfanyl-N(6)-dimethylallyladenosine(37) in tRNA + (sulfur carrier)-H + 5'-deoxyadenosine + L-methionine + A + S-adenosyl-L-homocysteine + 2 H(+). In terms of biological role, catalyzes the methylthiolation of N6-(dimethylallyl)adenosine (i(6)A), leading to the formation of 2-methylthio-N6-(dimethylallyl)adenosine (ms(2)i(6)A) at position 37 in tRNAs that read codons beginning with uridine. The chain is tRNA-2-methylthio-N(6)-dimethylallyladenosine synthase from Opitutus terrae (strain DSM 11246 / JCM 15787 / PB90-1).